A 73-amino-acid chain; its full sequence is Translation initiation factor IF-1 (73 aa).

One can recognise an S1-like domain in the interval 1–72 (MAKEDVIEVE…SRGRITYRYR (72 aa)).

This sequence belongs to the IF-1 family. In terms of assembly, component of the 30S ribosomal translation pre-initiation complex which assembles on the 30S ribosome in the order IF-2 and IF-3, IF-1 and N-formylmethionyl-tRNA(fMet); mRNA recruitment can occur at any time during PIC assembly.

It localises to the cytoplasm. Functionally, one of the essential components for the initiation of protein synthesis. Stabilizes the binding of IF-2 and IF-3 on the 30S subunit to which N-formylmethionyl-tRNA(fMet) subsequently binds. Helps modulate mRNA selection, yielding the 30S pre-initiation complex (PIC). Upon addition of the 50S ribosomal subunit IF-1, IF-2 and IF-3 are released leaving the mature 70S translation initiation complex. The protein is Translation initiation factor IF-1 of Rubrobacter xylanophilus (strain DSM 9941 / JCM 11954 / NBRC 16129 / PRD-1).